Consider the following 106-residue polypeptide: UPF0145 protein azo0572 (106 aa).

It belongs to the UPF0145 family.

The polypeptide is UPF0145 protein azo0572 (Azoarcus sp. (strain BH72)).